The primary structure comprises 411 residues: Argininosuccinate lyase (411 aa).

This sequence belongs to the lyase 1 family. Argininosuccinate lyase subfamily.

It localises to the cytoplasm. The enzyme catalyses 2-(N(omega)-L-arginino)succinate = fumarate + L-arginine. Its pathway is amino-acid biosynthesis; L-arginine biosynthesis; L-arginine from L-ornithine and carbamoyl phosphate: step 3/3. The protein is Argininosuccinate lyase of Legionella pneumophila (strain Paris).